The following is an 844-amino-acid chain: DNA mismatch repair protein MutS (844 aa).

Residue 610-617 coordinates ATP; it reads GPNMGGKS.

Belongs to the DNA mismatch repair MutS family.

Functionally, this protein is involved in the repair of mismatches in DNA. It is possible that it carries out the mismatch recognition step. This protein has a weak ATPase activity. The protein is DNA mismatch repair protein MutS of Francisella tularensis subsp. holarctica (strain FTNF002-00 / FTA).